The chain runs to 177 residues: Acireductone dioxygenase (177 aa).

Residues H99, H101, E105, and H143 each contribute to the Fe(2+) site. Ni(2+)-binding residues include H99, H101, E105, and H143.

It belongs to the acireductone dioxygenase (ARD) family. In terms of assembly, monomer. The cofactor is Fe(2+). Ni(2+) serves as cofactor.

It catalyses the reaction 1,2-dihydroxy-5-(methylsulfanyl)pent-1-en-3-one + O2 = 3-(methylsulfanyl)propanoate + CO + formate + 2 H(+). The catalysed reaction is 1,2-dihydroxy-5-(methylsulfanyl)pent-1-en-3-one + O2 = 4-methylsulfanyl-2-oxobutanoate + formate + 2 H(+). It functions in the pathway amino-acid biosynthesis; L-methionine biosynthesis via salvage pathway; L-methionine from S-methyl-5-thio-alpha-D-ribose 1-phosphate: step 5/6. Catalyzes 2 different reactions between oxygen and the acireductone 1,2-dihydroxy-3-keto-5-methylthiopentene (DHK-MTPene) depending upon the metal bound in the active site. Fe-containing acireductone dioxygenase (Fe-ARD) produces formate and 2-keto-4-methylthiobutyrate (KMTB), the alpha-ketoacid precursor of methionine in the methionine recycle pathway. Ni-containing acireductone dioxygenase (Ni-ARD) produces methylthiopropionate, carbon monoxide and formate, and does not lie on the methionine recycle pathway. This chain is Acireductone dioxygenase, found in Leptospira interrogans serogroup Icterohaemorrhagiae serovar copenhageni (strain Fiocruz L1-130).